A 61-amino-acid polypeptide reads, in one-letter code: MHMASKKLTRFERARLIGARALQISMGARPLVEIKESLDPVDIARKELEKKVMPLDVRRDK.

The protein belongs to the archaeal Rpo6/eukaryotic RPB6 RNA polymerase subunit family. As to quaternary structure, part of the RNA polymerase complex.

Its subcellular location is the cytoplasm. The enzyme catalyses RNA(n) + a ribonucleoside 5'-triphosphate = RNA(n+1) + diphosphate. Its function is as follows. DNA-dependent RNA polymerase (RNAP) catalyzes the transcription of DNA into RNA using the four ribonucleoside triphosphates as substrates. The chain is DNA-directed RNA polymerase subunit Rpo6 from Methanothermobacter thermautotrophicus (strain ATCC 29096 / DSM 1053 / JCM 10044 / NBRC 100330 / Delta H) (Methanobacterium thermoautotrophicum).